The sequence spans 874 residues: Alanine--tRNA ligase (874 aa).

Residues histidine 562, histidine 566, cysteine 665, and histidine 669 each coordinate Zn(2+).

Belongs to the class-II aminoacyl-tRNA synthetase family. The cofactor is Zn(2+).

It localises to the cytoplasm. The enzyme catalyses tRNA(Ala) + L-alanine + ATP = L-alanyl-tRNA(Ala) + AMP + diphosphate. Functionally, catalyzes the attachment of alanine to tRNA(Ala) in a two-step reaction: alanine is first activated by ATP to form Ala-AMP and then transferred to the acceptor end of tRNA(Ala). Also edits incorrectly charged Ser-tRNA(Ala) and Gly-tRNA(Ala) via its editing domain. In Pseudomonas syringae pv. syringae (strain B728a), this protein is Alanine--tRNA ligase.